The chain runs to 632 residues: Nucleoside triphosphatase I (632 aa).

Residues 42-204 (FLGLDKMHSL…IMLVNLLRPK (163 aa)) enclose the Helicase ATP-binding domain. Position 55–62 (55–62 (HETGVGKT)) interacts with ATP. A DEXH box motif is present at residues 141–144 (DECH). A Helicase C-terminal domain is found at 367–532 (KFTDVCLRIL…EFTQLFKVFK (166 aa)). The binding to the cap-specific mRNA (nucleoside-2'-O-)-methyltransferase stretch occupies residues 457 to 524 (DIFILDMTWN…DIIRNKSKEF (68 aa)).

It belongs to the helicase family. NPH I subfamily. In terms of assembly, monomer. Interacts (via C-terminus) with RAP94 (via N-terminus). Interacts with the cap-specific mRNA (nucleoside-2'-O-)-methyltransferase.

The protein resides in the virion. The enzyme catalyses a ribonucleoside 5'-triphosphate + H2O = a ribonucleoside 5'-diphosphate + phosphate + H(+). Functionally, DNA-dependent ATPase required for providing the needed energy to achieve the termination of early transcripts. Acts in concert with the RAP94 subunit of the virion RNA polymerase and the capping enzyme/VTF to catalyze release of UUUUUNU-containing nascent RNA from the elongation complex. NPH-I must bind ssDNA in order to exhibit ATPase activity. The polypeptide is Nucleoside triphosphatase I (NPH1) (Rabbit fibroma virus (strain Kasza) (RFV)).